Here is a 246-residue protein sequence, read N- to C-terminus: tRNA pseudouridine synthase A (246 aa).

The active-site Nucleophile is the D52. Y111 contributes to the substrate binding site.

The protein belongs to the tRNA pseudouridine synthase TruA family. In terms of assembly, homodimer.

It carries out the reaction uridine(38/39/40) in tRNA = pseudouridine(38/39/40) in tRNA. Functionally, formation of pseudouridine at positions 38, 39 and 40 in the anticodon stem and loop of transfer RNAs. The chain is tRNA pseudouridine synthase A from Borreliella burgdorferi (strain ZS7) (Borrelia burgdorferi).